The primary structure comprises 108 residues: Movement protein (108 aa).

The segment at methionine 1–alanine 25 is disordered. The helical transmembrane segment at glutamate 35–leucine 55 threads the bilayer. The interval leucine 73 to valine 108 is disordered. A compositionally biased stretch (basic and acidic residues) spans valine 99–valine 108.

Belongs to the mastrevirus movement protein family. Interacts with the capsid protein (CP). Part of a MP-CP-viral DNA complex.

It is found in the host membrane. Functionally, involved in the viral transport within, and between cells. In Megathyrsus maximus (PanSV), this protein is Movement protein.